Here is a 714-residue protein sequence, read N- to C-terminus: Methyl-accepting chemotaxis protein TlpQ (714 aa).

The helical transmembrane segment at 12–32 threads the bilayer; the sequence is ITLLAGLCLLGVVALLVGLSV. The Cache domain occupies 50 to 290; it reads LDESARLRLE…LLGKNLAKAD (241 aa). Histamine is bound by residues Glu170, 208–210, and Asp239; that span reads YFD. The chain crosses the membrane as a helical span at residues 360–380; sequence TWVELGLGLGAAVLGLLVLWL. The 55-residue stretch at 383–437 folds into the HAMP domain; sequence RGVTRPILGVAHMLRDIASGEGDLTQRLPHTGRDELGELAGWFNRFLDKLQPIIR. Positions 442–678 constitute a Methyl-accepting transducer domain; sequence SVRDARSTAD…EINRNVAAIR (237 aa).

This sequence belongs to the methyl-accepting chemotaxis (MCP) protein family. Homotetramer.

It is found in the cell membrane. Functionally, chemotactic-signal transducers respond to changes in the concentration of attractants and repellents in the environment, transduce a signal from the outside to the inside of the cell, and facilitate sensory adaptation through the variation of the level of methylation. TlpQ is a chemoreceptor that binds and mediates chemotaxis to histamine, a key biological signaling molecule. It binds histamine with high affinity, which permits responses to very low histamine concentrations. Chemotaxis to histamine may play a role in the virulence of P.aeruginosa by recruiting cells at the infection site and consequently modulating the expression of quorum-sensing-dependent virulence genes. TlpQ also binds and mediates chemotaxis to polyamines such as putrescine, spermidine, cadaverine, agmatine and ethylenediamine. In addition, binds the quorum-sensing signal autoinducer 2 (AI-2), thus inducing chemotaxis toward AI-2 and biofilm formation. The polypeptide is Methyl-accepting chemotaxis protein TlpQ (Pseudomonas aeruginosa (strain ATCC 15692 / DSM 22644 / CIP 104116 / JCM 14847 / LMG 12228 / 1C / PRS 101 / PAO1)).